The chain runs to 549 residues: MESLALRSISLSASYLSLHRSSSKSFALLPPSISVHTSPTLRSLSISSPRFTLRATASSLPEEQNKPQPPPPSPPQPQGAKLIPLAISVSIGLIVRFLIPRPEQVTSQGWQLLSIFLFTISGLVLGPLPVGAWAFIGLTASIVTKTLPFSTAFAAFTNELIWLIAISFFFARGFIKTGLGDRIATYFVKWLGKSTLGLSYGLAFCETLMGLIMPSTMARAGGVFLPVIKSLAISAGSYPGDPSSRKLGSFLIQTQLQCSGASGAILLTSAAQNLLCLKLAREVGVVISNPWITWFKVASVPAFVSLLCTPLIIYKLYPPELKHTPEAPAAAAKKLERLGPITKNEWIMLGAMAFTVSLWVFGEAIGIASVVSAMIGLSTLLLLGVINWDDCLSDKSAWDSLTWFAVLIGMAGQLTNLGVVAWMSDCVAKLLQSLSLTWPASFIILQACYLLIHYLFASQTGHAGALYPPFLAMQIAAGVPGVLAALCLAFNNNLSGALAHYSGGPAALYYGAGYVDLRDMFRVGFVMALVQAIIWGGVGSFWWKFLGLY.

The N-terminal 54 residues, 1–54 (MESLALRSISLSASYLSLHRSSSKSFALLPPSISVHTSPTLRSLSISSPRFTLR), are a transit peptide targeting the chloroplast. Residues 57–79 (ASSLPEEQNKPQPPPPSPPQPQG) are disordered. The segment covering 67–77 (PQPPPPSPPQP) has biased composition (pro residues). 12 helical membrane-spanning segments follow: residues 79–99 (GAKL…RFLI), 115–135 (IFLF…AWAF), 151–171 (TAFA…FFFA), 220–240 (AGGV…SYPG), 247–267 (LGSF…AILL), 294–314 (WFKV…LIIY), 344–364 (NEWI…FGEA), 365–385 (IGIA…LLGV), 403–423 (WFAV…VAWM), 436–456 (LTWP…HYLF), 470–490 (FLAM…CLAF), and 523–543 (VGFV…SFWW).

The protein belongs to the SLC13A/DASS transporter (TC 2.A.47) family. DIT1 subfamily. As to expression, expressed in roots, rosette and cauline leaves, stems, flowers and siliques.

Its subcellular location is the plastid. It is found in the chloroplast inner membrane. Its function is as follows. May be involved in the transport of dicarboxylate compounds. In Arabidopsis thaliana (Mouse-ear cress), this protein is Dicarboxylate transporter 2.2, chloroplastic (DIT2-2).